The following is a 623-amino-acid chain: DNA mismatch repair protein MutL (623 aa).

The span at 353–368 (AQQSAPRPANSYSPAS) shows a compositional bias: polar residues. Positions 353-389 (AQQSAPRPANSYSPASWRTAPPAPRSEWSPQTAQTAH) are disordered.

It belongs to the DNA mismatch repair MutL/HexB family.

In terms of biological role, this protein is involved in the repair of mismatches in DNA. It is required for dam-dependent methyl-directed DNA mismatch repair. May act as a 'molecular matchmaker', a protein that promotes the formation of a stable complex between two or more DNA-binding proteins in an ATP-dependent manner without itself being part of a final effector complex. This Brucella melitensis biotype 2 (strain ATCC 23457) protein is DNA mismatch repair protein MutL.